A 608-amino-acid polypeptide reads, in one-letter code: Threonine--tRNA ligase (608 aa).

Residues M1–E144 are editing domain. Residues P195–P489 form a catalytic region. Residues C286, H338, and H459 each contribute to the Zn(2+) site.

It belongs to the class-II aminoacyl-tRNA synthetase family. Homodimer. The cofactor is Zn(2+).

The protein resides in the cytoplasm. The catalysed reaction is tRNA(Thr) + L-threonine + ATP = L-threonyl-tRNA(Thr) + AMP + diphosphate + H(+). Its function is as follows. Catalyzes the attachment of threonine to tRNA(Thr) in a two-step reaction: L-threonine is first activated by ATP to form Thr-AMP and then transferred to the acceptor end of tRNA(Thr). Also edits incorrectly charged L-seryl-tRNA(Thr). This Methanobrevibacter smithii (strain ATCC 35061 / DSM 861 / OCM 144 / PS) protein is Threonine--tRNA ligase.